Consider the following 299-residue polypeptide: Plant-type L-asparaginase (299 aa).

The active-site Nucleophile is the Thr169. Substrate-binding positions include 197–200 (RVGD) and 220–223 (TGVG).

The protein belongs to the Ntn-hydrolase family. In terms of assembly, heterotetramer of two alpha and two beta chains arranged as a dimer of alpha/beta heterodimers. The uncleaved protein forms homodimers. In terms of processing, autocleaved. Generates the alpha and beta subunits. The N-terminal residue of the beta subunit is thought to be responsible for the nucleophile hydrolase activity.

It catalyses the reaction L-asparagine + H2O = L-aspartate + NH4(+). Its activity is regulated as follows. Divalent metal ions and EDTA do not have significant effect on enzyme activity, indicating that activity is metal-independent. In terms of biological role, catalyzes the hydrolysis of L-asparagine into L-aspartate and ammonia. Also displays D-asparaginase activity, which is about 20% of the L-asparaginase activity. Does not exhibit glutaminase activity. The polypeptide is Plant-type L-asparaginase (Pyrobaculum calidifontis (strain DSM 21063 / JCM 11548 / VA1)).